A 456-amino-acid polypeptide reads, in one-letter code: Alcohol acyl transferase 1 allele GSc (456 aa).

Active-site proton acceptor residues include histidine 165 and asparagine 386.

This sequence belongs to the plant acyltransferase family. In terms of tissue distribution, expressed at very low levels in the skin of ripe fruit.

Its function is as follows. Involved in the biosynthesis of volatile esters which confer ripe apple fruit flavor. Alcohol acyl transferase that can use a wide range of alcohols as substrate to produce esters. The chain is Alcohol acyl transferase 1 allele GSc from Malus domestica (Apple).